The primary structure comprises 338 residues: Phenylalanine--tRNA ligase alpha subunit (338 aa).

Residue Glu252 coordinates Mg(2+).

This sequence belongs to the class-II aminoacyl-tRNA synthetase family. Phe-tRNA synthetase alpha subunit type 1 subfamily. In terms of assembly, tetramer of two alpha and two beta subunits. It depends on Mg(2+) as a cofactor.

The protein localises to the cytoplasm. The enzyme catalyses tRNA(Phe) + L-phenylalanine + ATP = L-phenylalanyl-tRNA(Phe) + AMP + diphosphate + H(+). The sequence is that of Phenylalanine--tRNA ligase alpha subunit from Pseudomonas aeruginosa (strain ATCC 15692 / DSM 22644 / CIP 104116 / JCM 14847 / LMG 12228 / 1C / PRS 101 / PAO1).